The sequence spans 194 residues: uncharacterized protein (194 aa).

It belongs to the calycin superfamily. Fatty-acid binding protein (FABP) family.

This is an uncharacterized protein from Caenorhabditis elegans.